Reading from the N-terminus, the 99-residue chain is Integration host factor subunit alpha (99 aa).

The disordered stretch occupies residues 49-75 (FGNFDLRDKNQRPGRNPKTGEDIPITA).

The protein belongs to the bacterial histone-like protein family. As to quaternary structure, heterodimer of an alpha and a beta chain.

Its function is as follows. This protein is one of the two subunits of integration host factor, a specific DNA-binding protein that functions in genetic recombination as well as in transcriptional and translational control. This chain is Integration host factor subunit alpha, found in Salmonella arizonae (strain ATCC BAA-731 / CDC346-86 / RSK2980).